Here is a 143-residue protein sequence, read N- to C-terminus: Deoxyuridine 5'-triphosphate nucleotidohydrolase (143 aa).

DUMP contacts are provided by serine 65, valine 78, arginine 132, and glycine 138.

This sequence belongs to the dUTPase family. Homotrimer. The cofactor is Mg(2+).

It catalyses the reaction dUTP + H2O = dUMP + diphosphate + H(+). Its pathway is pyrimidine metabolism; dUMP biosynthesis; dUMP from dCTP (dUTP route): step 2/2. Its function is as follows. Involved in nucleotide metabolism via production of dUMP, the immediate precursor of thymidine nucleotides, and decreases the intracellular concentration of dUTP so that uracil cannot be incorporated into DNA. The chain is Deoxyuridine 5'-triphosphate nucleotidohydrolase (DUT1) from Antonospora locustae (Microsporidian parasite).